A 355-amino-acid polypeptide reads, in one-letter code: MALRLLRLVPASASARGLAAGAQRVGRIHTSVHCKLRYGLLASILGDKTTKKLHEYSRVITVDGNICSGKNKLARDIAEQLGMKHYPEAGIQYSSSTTGDGRPLDIEFSGSCSLEKFYDNPKSNDGNSYRLQSWLYASRLLQYSDALEHLLSTGQGVVLERSIYSDFVFLEAMYNQGFIRKQCVDHYNEIKRLTLPEYLPPHAVIYIDVPVSEIQSRIQKKGDPHEMKVTSAYLQDIEDAYKKTFLPKMSEICEVLVYSSWEAEDSTKVVEDIEYLNYNKGPWLKQDDRTFHNLRMLVQDKREVLNYTTVPVYLPEITIGAHQGSRIYDSFRELPGRKYAPGYNADVGDKWIWLK.

A mitochondrion-targeting transit peptide spans 1–35 (MALRLLRLVPASASARGLAAGAQRVGRIHTSVHCK). N6-acetyllysine; alternate is present on lysine 122. Position 122 is an N6-succinyllysine; alternate (lysine 122). Position 250 is a phosphoserine; by PINK1 (serine 250). Lysine 285 carries the post-translational modification N6-succinyllysine.

Belongs to the complex I NDUFA10 subunit family. As to quaternary structure, complex I is composed of 45 different subunits. This a component of the hydrophobic protein fraction. FAD is required as a cofactor. Post-translationally, phosphorylation at Ser-250 by PINK1 is required for the binding and/or reduction of the complex I substrate ubiquinone. Expressed in the head and flagellum of epididymal sperm but not in testicular sperm (at protein level).

Its subcellular location is the mitochondrion matrix. In terms of biological role, accessory subunit of the mitochondrial membrane respiratory chain NADH dehydrogenase (Complex I), that is believed not to be involved in catalysis. Complex I functions in the transfer of electrons from NADH to the respiratory chain. The immediate electron acceptor for the enzyme is believed to be ubiquinone. The chain is NADH dehydrogenase [ubiquinone] 1 alpha subcomplex subunit 10, mitochondrial (Ndufa10) from Rattus norvegicus (Rat).